We begin with the raw amino-acid sequence, 454 residues long: Exopolyphosphatase PRUNE1 (454 aa).

Position 1 is an N-acetylmethionine (methionine 1). Residues aspartate 28, aspartate 30, aspartate 106, and aspartate 179 each contribute to the Mn(2+) site. A DHH motif motif is present at residues 106–108 (DHH). Residues 394 to 421 (SLIAGLSQDDEDPPLPPTPMNSLVDECP) are essential for homodimerization. Positions 398 to 421 (GLSQDDEDPPLPPTPMNSLVDECP) are disordered. A Phosphoserine modification is found at serine 400. Residue threonine 411 is modified to Phosphothreonine. At serine 415 the chain carries Phosphoserine.

The protein belongs to the PPase class C family. Prune subfamily. Homooligomer. Able to homodimerize via its C-terminal domain. Interacts with NME1. Interacts with GSK3; at focal adhesion complexes where paxillin and vinculin are colocalized. Interacts with alpha and beta tubulin. Requires Mn(2+) as cofactor.

It localises to the cytoplasm. It is found in the nucleus. The protein resides in the cell junction. The protein localises to the focal adhesion. The catalysed reaction is diphosphate + H2O = 2 phosphate + H(+). Activated by magnesium ions and inhibited by manganese ions. Inhibited by dipyridamole, moderately sensitive to IBMX and inhibited by vinpocetine. Its function is as follows. Phosphodiesterase (PDE) that has higher activity toward cAMP than cGMP, as substrate. Plays a role in cell proliferation, migration and differentiation, and acts as a negative regulator of NME1. Plays a role in the regulation of neurogenesis. Involved in the regulation of microtubule polymerization. The chain is Exopolyphosphatase PRUNE1 (Prune1) from Rattus norvegicus (Rat).